A 136-amino-acid chain; its full sequence is MSKAKLDDSTQRPLYGERIIEESKIICFDNPNKKRIYEISIQLPEFTCKCPFSGYPDFAKLSIIYQPNLKVYELKSLKLYINSFRDIKISHEEVVNRIMDDLVNEGSPHWIHLNAAFNPRGNVSMQLDIFSGQKKN.

Residue Cys-50 is the Thioimide intermediate of the active site. Asp-57 serves as the catalytic Proton donor. Residues 72–74 (YEL) and 91–92 (HE) each bind substrate.

This sequence belongs to the GTP cyclohydrolase I family. QueF type 1 subfamily.

The protein resides in the cytoplasm. The enzyme catalyses 7-aminomethyl-7-carbaguanine + 2 NADP(+) = 7-cyano-7-deazaguanine + 2 NADPH + 3 H(+). The protein operates within tRNA modification; tRNA-queuosine biosynthesis. Functionally, catalyzes the NADPH-dependent reduction of 7-cyano-7-deazaguanine (preQ0) to 7-aminomethyl-7-deazaguanine (preQ1). The protein is NADPH-dependent 7-cyano-7-deazaguanine reductase of Prochlorococcus marinus (strain MIT 9301).